The primary structure comprises 440 residues: MYKSPLTLLTLLTICFGFFDLSSALYGSSSPVVQLTASNFKSKVLNSNGVVLVEFFAPWCGHCKALTPTWEKVANILKGVATVAAIDADAHQSAAQDYGIKGFPTIKVFVPGKAPIDYQGARDAKSIANFAYKQIKGLLSDRLEGKSKPTGGGSKEKKSEPSASVELNASNFDDLVIESNELWIVEFFAPWCGHCKKLAPEWKRAAKNLQGKVKLGHVNCDVEQSIMSRFKVQGFPTILVFGPDKSSPYPYEGARSASAIESFASELVESSAGPVEVTELTGPDVMEKKCGSAAICFISFLPDILDSKAEGRNKYLEMLLSVAEKFKKQPYSFMWVAAVTQMDLEKRVNVGGYGYPAMVAMNVKKGVYAPLKSAFELQHLLEFVKDAGTGGKGNVPMNGTPEIVKTKEWDGKDGELIEEDEFSLDELMGGDDAVGSKDEL.

The signal sequence occupies residues 1-24 (MYKSPLTLLTLLTICFGFFDLSSA). Thioredoxin domains are found at residues 25-136 (LYGS…KQIK) and 154-269 (SKEK…ELVE). Active-site nucleophile residues include Cys-60 and Cys-63. Cys-60 and Cys-63 are joined by a disulfide. Positions 143-163 (LEGKSKPTGGGSKEKKSEPSA) are disordered. Asn-168 is a glycosylation site (N-linked (GlcNAc...) asparagine). Residues Cys-192 and Cys-195 each act as nucleophile in the active site. Cys-192 and Cys-195 are joined by a disulfide. The short motif at 437–440 (KDEL) is the Prevents secretion from ER element.

Belongs to the protein disulfide isomerase family. Widely expressed.

It localises to the endoplasmic reticulum lumen. It catalyses the reaction Catalyzes the rearrangement of -S-S- bonds in proteins.. Functionally, acts as a protein-folding catalyst that interacts with nascent polypeptides to catalyze the formation, isomerization, and reduction or oxidation of disulfide bonds. In Arabidopsis thaliana (Mouse-ear cress), this protein is Protein disulfide-isomerase 2-3 (PDIL2-3).